Here is a 691-residue protein sequence, read N- to C-terminus: Histone-lysine N-methyltransferase Set8 (691 aa).

A disordered region spans residues 1 to 29 (MIMVRRRQRPAKEAASSSSGGASSGSGIP). A compositionally biased stretch (low complexity) spans 14–27 (AASSSSGGASSGSG). Serine 195 and serine 250 each carry phosphoserine. Residue threonine 252 is modified to Phosphothreonine. At serine 281 the chain carries Phosphoserine. Disordered regions lie at residues 341-363 (TANT…HRIL), 382-401 (GSAD…TTTA), 407-437 (KSRR…QQQQ), and 464-516 (AEER…ATNG). Threonine 344 carries the phosphothreonine modification. Residues serine 346, serine 383, serine 388, and serine 392 each carry the phosphoserine modification. Composition is skewed to polar residues over residues 421 to 430 (YQPQLQKPPS) and 471 to 481 (NKAPATANSNK). The SET domain maps to 555 to 676 (DGLQVRHFMG…PGEELTYDYG (122 aa)). S-adenosyl-L-methionine contacts are provided by residues 565-567 (KGR), tyrosine 610, and 637-638 (NH).

Belongs to the class V-like SAM-binding methyltransferase superfamily. Histone-lysine methyltransferase family. PR/SET subfamily.

It localises to the nucleus. Its subcellular location is the chromosome. It carries out the reaction L-lysyl(20)-[histone H4] + S-adenosyl-L-methionine = N(6)-methyl-L-lysyl(20)-[histone H4] + S-adenosyl-L-homocysteine + H(+). Histone methyltransferase that specifically monomethylates 'Lys-20' of histone H4. H4 'Lys-20' monomethylation is enriched during mitosis and represents a specific tag for epigenetic transcriptional repression. Mainly functions in euchromatin regions, thereby playing a central role in the silencing of euchromatic genes. Required for cell proliferation, possibly by contributing to the maintenance of proper higher-order structure of DNA and chromosome condensation during mitosis. In Drosophila melanogaster (Fruit fly), this protein is Histone-lysine N-methyltransferase Set8.